The following is a 741-amino-acid chain: 1,4-alpha-glucan branching enzyme GlgB (741 aa).

Asp420 functions as the Nucleophile in the catalytic mechanism. The active-site Proton donor is Glu473.

This sequence belongs to the glycosyl hydrolase 13 family. GlgB subfamily. Monomer.

It carries out the reaction Transfers a segment of a (1-&gt;4)-alpha-D-glucan chain to a primary hydroxy group in a similar glucan chain.. It participates in glycan biosynthesis; glycogen biosynthesis. In terms of biological role, catalyzes the formation of the alpha-1,6-glucosidic linkages in glycogen by scission of a 1,4-alpha-linked oligosaccharide from growing alpha-1,4-glucan chains and the subsequent attachment of the oligosaccharide to the alpha-1,6 position. The protein is 1,4-alpha-glucan branching enzyme GlgB of Pseudomonas syringae pv. tomato (strain ATCC BAA-871 / DC3000).